A 492-amino-acid chain; its full sequence is Glycerol kinase (492 aa).

An ADP-binding site is contributed by T11. Residues T11 and T12 each coordinate ATP. T11 is a binding site for sn-glycerol 3-phosphate. Residue K15 participates in ADP binding. The sn-glycerol 3-phosphate site is built by R79, E80, Y129, and D238. Glycerol contacts are provided by R79, E80, Y129, D238, and Q239. Residues T260, G302, G403, and N407 each coordinate ADP. Residues T260, G302, and G403 each coordinate ATP.

It belongs to the FGGY kinase family.

The catalysed reaction is glycerol + ATP = sn-glycerol 3-phosphate + ADP + H(+). The protein operates within polyol metabolism; glycerol degradation via glycerol kinase pathway; sn-glycerol 3-phosphate from glycerol: step 1/1. Inhibited by fructose 1,6-bisphosphate (FBP). Functionally, key enzyme in the regulation of glycerol uptake and metabolism. Catalyzes the phosphorylation of glycerol to yield sn-glycerol 3-phosphate. In Aquifex aeolicus (strain VF5), this protein is Glycerol kinase.